A 207-amino-acid chain; its full sequence is MANVKLFDQTGKEVSTVELNDAIFGIEPNESVVFDVVISQRASLRQGTHAVKNRSAVSGGGRKPWRQKGTGRARQGSIRSPQWRGGGVVFGPTPRSYGYKLPQKVRRLALKSVYSAKVAEDKFVAVESLSFAAPKTAEFAKVLSALSIDTKVLVLVEEGNEFAALSARNLPNVAVATAATASVLDIVSADKLLVTKEAISTIEEVLA.

The interval 49-78 (HAVKNRSAVSGGGRKPWRQKGTGRARQGSI) is disordered.

Belongs to the universal ribosomal protein uL4 family. As to quaternary structure, part of the 50S ribosomal subunit.

One of the primary rRNA binding proteins, this protein initially binds near the 5'-end of the 23S rRNA. It is important during the early stages of 50S assembly. It makes multiple contacts with different domains of the 23S rRNA in the assembled 50S subunit and ribosome. Functionally, forms part of the polypeptide exit tunnel. In Streptococcus equi subsp. zooepidemicus (strain MGCS10565), this protein is Large ribosomal subunit protein uL4.